The chain runs to 278 residues: Putative glycosyltransferase EpsE (278 aa).

It belongs to the glycosyltransferase 2 family.

Functionally, may be involved in the production of the exopolysaccharide (EPS) component of the extracellular matrix during biofilm formation. EPS is responsible for the adhesion of chains of cells into bundles. Required for biofilm maintenance. In Bacillus subtilis (strain 168), this protein is Putative glycosyltransferase EpsE (epsE).